Consider the following 159-residue polypeptide: Phosphopantetheine adenylyltransferase (159 aa).

Residue Thr-10 coordinates substrate. Residues 10 to 11 and His-18 contribute to the ATP site; that span reads TF. Residues Lys-42, Met-74, and Arg-88 each contribute to the substrate site. ATP contacts are provided by residues 89–91, Glu-99, and 124–130; these read GLR and WSFISSS.

The protein belongs to the bacterial CoaD family. Homohexamer. The cofactor is Mg(2+).

The protein resides in the cytoplasm. The catalysed reaction is (R)-4'-phosphopantetheine + ATP + H(+) = 3'-dephospho-CoA + diphosphate. It participates in cofactor biosynthesis; coenzyme A biosynthesis; CoA from (R)-pantothenate: step 4/5. In terms of biological role, reversibly transfers an adenylyl group from ATP to 4'-phosphopantetheine, yielding dephospho-CoA (dPCoA) and pyrophosphate. The protein is Phosphopantetheine adenylyltransferase of Salmonella paratyphi A (strain ATCC 9150 / SARB42).